A 101-amino-acid chain; its full sequence is Urease subunit beta (101 aa).

Belongs to the urease beta subunit family. Heterotrimer of UreA (gamma), UreB (beta) and UreC (alpha) subunits. Three heterotrimers associate to form the active enzyme.

It localises to the cytoplasm. The enzyme catalyses urea + 2 H2O + H(+) = hydrogencarbonate + 2 NH4(+). Its pathway is nitrogen metabolism; urea degradation; CO(2) and NH(3) from urea (urease route): step 1/1. The protein is Urease subunit beta of Cereibacter sphaeroides (strain ATCC 17025 / ATH 2.4.3) (Rhodobacter sphaeroides).